Here is a 290-residue protein sequence, read N- to C-terminus: Nitrogenase iron protein 1 (290 aa).

10 to 17 (GKGGIGKS) contacts ATP. Position 98 (C98) interacts with [4Fe-4S] cluster. R101 carries the post-translational modification ADP-ribosylarginine; by dinitrogenase reductase ADP-ribosyltransferase. C133 lines the [4Fe-4S] cluster pocket.

The protein belongs to the NifH/BchL/ChlL family. In terms of assembly, homodimer. [4Fe-4S] cluster is required as a cofactor. The reversible ADP-ribosylation of Arg-101 inactivates the nitrogenase reductase and regulates nitrogenase activity.

The catalysed reaction is N2 + 8 reduced [2Fe-2S]-[ferredoxin] + 16 ATP + 16 H2O = H2 + 8 oxidized [2Fe-2S]-[ferredoxin] + 2 NH4(+) + 16 ADP + 16 phosphate + 6 H(+). With respect to regulation, nitrogenase holoenzyme is subject to 'conformational protection' by FeSII; under oxidizing conditions FeSII binds to the holoenzyme and reversibly protects it from oxidation. In terms of biological role, the key enzymatic reactions in nitrogen fixation are catalyzed by the nitrogenase complex, which has 2 components: the iron protein (component 2) and a component 1 which is either a molybdenum-iron protein, a vanadium-iron, or an iron-iron protein. This Azotobacter vinelandii protein is Nitrogenase iron protein 1 (nifH1).